Here is a 243-residue protein sequence, read N- to C-terminus: tRNA (guanine-N(1)-)-methyltransferase (243 aa).

Residues glycine 123 and 143–148 (LGDFVM) each bind S-adenosyl-L-methionine.

Belongs to the RNA methyltransferase TrmD family. Homodimer.

It localises to the cytoplasm. The catalysed reaction is guanosine(37) in tRNA + S-adenosyl-L-methionine = N(1)-methylguanosine(37) in tRNA + S-adenosyl-L-homocysteine + H(+). Its function is as follows. Specifically methylates guanosine-37 in various tRNAs. This Ruegeria pomeroyi (strain ATCC 700808 / DSM 15171 / DSS-3) (Silicibacter pomeroyi) protein is tRNA (guanine-N(1)-)-methyltransferase.